We begin with the raw amino-acid sequence, 497 residues long: MTLMKKFYVTTPIYYVNDVPHLGHAYTTIAADTIARYYRLRDYDVFFLTGTDEHGLKIQKKAEELGISPKELVDRNAERFKKLWEFLKIEYTKFIRTTDPYHVKFVQKVFEECYKRGDIYLGEYEGWYCVGCEEFKSEAELAEDHTCPIHQKKCEYIKEPSYFFRLSKYQDKLLELYEKNPEFIQPDYRRNEIISFVKQGLKDLSVTRPRSRVKWGIPVPFDPEHTIYVWFDALFNYISALEDKVEIYWPADLHLVGKDILRFHTVYWPAFLMSLGYELPKKVFAHGWWTVEGKKMSKTLGNVVDPYEVVQEYGLDEVRYFLLREVPFGQDGDFSKKAILNRINGELANEIGNLYSRVVNMAHKFLGGEVSGARDEEYAKIAQESIKNYENYMEKVNFYKAIEEILKFTSYLNKYVDEKQPWALNKERKKEELQKVLYALVDGLFVLTHLLYPITPNKMKEALQMLGEKEFLKELKPYSKNTYKLGERKILFPKREG.

Residues 14 to 24 (YYVNDVPHLGH) carry the 'HIGH' region motif. 4 residues coordinate Zn(2+): Cys-129, Cys-132, Cys-147, and His-150. A 'KMSKS' region motif is present at residues 295–299 (KMSKT). An ATP-binding site is contributed by Lys-298.

This sequence belongs to the class-I aminoacyl-tRNA synthetase family. MetG type 2A subfamily. Monomer. Zn(2+) serves as cofactor.

Its subcellular location is the cytoplasm. The enzyme catalyses tRNA(Met) + L-methionine + ATP = L-methionyl-tRNA(Met) + AMP + diphosphate. Functionally, is required not only for elongation of protein synthesis but also for the initiation of all mRNA translation through initiator tRNA(fMet) aminoacylation. The sequence is that of Methionine--tRNA ligase (metG) from Aquifex aeolicus (strain VF5).